We begin with the raw amino-acid sequence, 268 residues long: MSFEINWQDLGEDEAVNDSIKSFLNSHLQSISLPSYVSSLQVTDFCLGGIPPNITLREISDPLDEFYNHIEKEELPKDKIPEESDSGCQSADGENGDLLPEVQAESDLQFLVEVDYKGDMRIGVSAELALNYPSPSFMTLPVKLSITDLGIHALCLVAYISKQLFVSFLCDVADPILDARESLIDLGSSAILGKKSLERISLIRSIKIDSEIGEQNNVEGSVLRSVGKLEQFLLEVFRTILKKEAAWPSWINLDFNEDPSGNESSDED.

The SMP-LTD domain maps to Met1–Asn256. The tract at residues Leu75 to Glu94 is disordered.

Belongs to the MDM12 family. Component of the ER-mitochondria encounter structure (ERMES) or MDM complex, composed of MMM1, MDM10, MDM12 and MDM34. An MMM1 homodimer associates with one molecule of MDM12 on each side in a pairwise head-to-tail manner, and the SMP-LTD domains of MMM1 and MDM12 generate a continuous hydrophobic tunnel for phospholipid trafficking.

The protein resides in the mitochondrion outer membrane. The protein localises to the endoplasmic reticulum membrane. Component of the ERMES/MDM complex, which serves as a molecular tether to connect the endoplasmic reticulum (ER) and mitochondria. Components of this complex are involved in the control of mitochondrial shape and protein biogenesis, and function in nonvesicular lipid trafficking between the ER and mitochondria. MDM12 is required for the interaction of the ER-resident membrane protein MMM1 and the outer mitochondrial membrane-resident beta-barrel protein MDM10. The MDM12-MMM1 subcomplex functions in the major beta-barrel assembly pathway that is responsible for biogenesis of all mitochondrial outer membrane beta-barrel proteins, and acts in a late step after the SAM complex. The MDM10-MDM12-MMM1 subcomplex further acts in the TOM40-specific pathway after the action of the MDM12-MMM1 complex. Essential for establishing and maintaining the structure of mitochondria and maintenance of mtDNA nucleoids. The polypeptide is Mitochondrial distribution and morphology protein 12 (Lachancea thermotolerans (strain ATCC 56472 / CBS 6340 / NRRL Y-8284) (Yeast)).